Here is a 310-residue protein sequence, read N- to C-terminus: Tagatose-6-phosphate kinase (310 aa).

Belongs to the carbohydrate kinase PfkB family. LacC subfamily.

The enzyme catalyses D-tagatofuranose 6-phosphate + ATP = D-tagatofuranose 1,6-bisphosphate + ADP + H(+). The protein operates within carbohydrate metabolism; D-tagatose 6-phosphate degradation; D-glyceraldehyde 3-phosphate and glycerone phosphate from D-tagatose 6-phosphate: step 1/2. The chain is Tagatose-6-phosphate kinase from Staphylococcus aureus (strain MRSA252).